Here is a 461-residue protein sequence, read N- to C-terminus: ATP-dependent protease ATPase subunit HslU (461 aa).

Residues Val-21, 63 to 68, Asp-274, Glu-339, and Arg-411 each bind ATP; that span reads GVGKTE.

Belongs to the ClpX chaperone family. HslU subfamily. As to quaternary structure, a double ring-shaped homohexamer of HslV is capped on each side by a ring-shaped HslU homohexamer. The assembly of the HslU/HslV complex is dependent on binding of ATP.

It localises to the cytoplasm. Functionally, ATPase subunit of a proteasome-like degradation complex; this subunit has chaperone activity. The binding of ATP and its subsequent hydrolysis by HslU are essential for unfolding of protein substrates subsequently hydrolyzed by HslV. HslU recognizes the N-terminal part of its protein substrates and unfolds these before they are guided to HslV for hydrolysis. The sequence is that of ATP-dependent protease ATPase subunit HslU from Caldanaerobacter subterraneus subsp. tengcongensis (strain DSM 15242 / JCM 11007 / NBRC 100824 / MB4) (Thermoanaerobacter tengcongensis).